Here is a 303-residue protein sequence, read N- to C-terminus: tRNA dimethylallyltransferase (303 aa).

13-20 (GPTASGKS) lines the ATP pocket. Residue 15–20 (TASGKS) participates in substrate binding. Interaction with substrate tRNA stretches follow at residues 38–41 (DSMQ) and 162–166 (QRLLR).

It belongs to the IPP transferase family. As to quaternary structure, monomer. It depends on Mg(2+) as a cofactor.

The catalysed reaction is adenosine(37) in tRNA + dimethylallyl diphosphate = N(6)-dimethylallyladenosine(37) in tRNA + diphosphate. Catalyzes the transfer of a dimethylallyl group onto the adenine at position 37 in tRNAs that read codons beginning with uridine, leading to the formation of N6-(dimethylallyl)adenosine (i(6)A). This Methylocella silvestris (strain DSM 15510 / CIP 108128 / LMG 27833 / NCIMB 13906 / BL2) protein is tRNA dimethylallyltransferase.